Here is a 378-residue protein sequence, read N- to C-terminus: Carbamoyl phosphate synthase small chain (378 aa).

The CPSase stretch occupies residues 1–188; sequence MSILKEAYLY…THFAYGTSPN (188 aa). 3 residues coordinate L-glutamine: serine 49, glycine 244, and glycine 246. Positions 192–378 constitute a Glutamine amidotransferase type-1 domain; that stretch reads KVVAIDFGAK…FEEFAKLCCK (187 aa). The active-site Nucleophile is cysteine 272. Positions 273, 276, 314, and 317 each coordinate L-glutamine. Residues histidine 355 and glutamate 357 contribute to the active site.

It belongs to the CarA family. Composed of two chains; the small (or glutamine) chain promotes the hydrolysis of glutamine to ammonia, which is used by the large (or ammonia) chain to synthesize carbamoyl phosphate. Tetramer of heterodimers (alpha,beta)4.

The catalysed reaction is hydrogencarbonate + L-glutamine + 2 ATP + H2O = carbamoyl phosphate + L-glutamate + 2 ADP + phosphate + 2 H(+). It carries out the reaction L-glutamine + H2O = L-glutamate + NH4(+). It participates in amino-acid biosynthesis; L-arginine biosynthesis; carbamoyl phosphate from bicarbonate: step 1/1. The protein operates within pyrimidine metabolism; UMP biosynthesis via de novo pathway; (S)-dihydroorotate from bicarbonate: step 1/3. Its function is as follows. Small subunit of the glutamine-dependent carbamoyl phosphate synthetase (CPSase). CPSase catalyzes the formation of carbamoyl phosphate from the ammonia moiety of glutamine, carbonate, and phosphate donated by ATP, constituting the first step of 2 biosynthetic pathways, one leading to arginine and/or urea and the other to pyrimidine nucleotides. The small subunit (glutamine amidotransferase) binds and cleaves glutamine to supply the large subunit with the substrate ammonia. The chain is Carbamoyl phosphate synthase small chain from Helicobacter hepaticus (strain ATCC 51449 / 3B1).